Consider the following 315-residue polypeptide: D-erythronate dehydrogenase (315 aa).

3 residues coordinate NAD(+): serine 119, tyrosine 143, and lysine 147. Tyrosine 143 serves as the catalytic Proton acceptor.

The protein belongs to the NAD(P)-dependent epimerase/dehydratase family.

The enzyme catalyses D-erythronate + NAD(+) = 2-dehydro-D-erythronate + NADH + H(+). Its function is as follows. Catalyzes oxidation of D-erythronate to 2-oxo-tetronate. Can use either NAD(+) or NADP(+) as cosubstrate, with a preference for NAD(+). The chain is D-erythronate dehydrogenase from Haemophilus influenzae (strain ATCC 51907 / DSM 11121 / KW20 / Rd).